The chain runs to 503 residues: Angiopoietin-4 (503 aa).

A signal peptide spans 1–24 (MLSQLAMLQGSLLLVVATMSVAQQ). A coiled-coil region spans residues 84-238 (TQQVKQLEQA…RQSAALTNIE (155 aa)). 9 N-linked (GlcNAc...) asparagine glycosylation sites follow: Asn-96, Asn-126, Asn-140, Asn-158, Asn-247, Asn-274, Asn-311, Asn-337, and Asn-427. The Fibrinogen C-terminal domain maps to 282 to 502 (MAGEQVFQDC…ASRMMIRPLD (221 aa)). A disulfide bridge links Cys-291 with Cys-320. Cys-444 and Cys-457 form a disulfide bridge.

Homodimer; disulfide-linked. Interacts with TEK/TIE2. In terms of tissue distribution, highly expressed in the lung with much lower levels found in other tissues.

It is found in the secreted. Binds to TEK/TIE2, modulating ANGPT1 signaling. Can induce tyrosine phosphorylation of TEK/TIE2. Promotes endothelial cell survival, migration and angiogenesis. This Homo sapiens (Human) protein is Angiopoietin-4 (ANGPT4).